Here is a 349-residue protein sequence, read N- to C-terminus: Anthranilate phosphoribosyltransferase (349 aa).

5-phospho-alpha-D-ribose 1-diphosphate-binding positions include glycine 82, 85 to 86 (GD), 92 to 95 (NVST), 110 to 118 (KHGNRAVSG), and serine 122. Glycine 82 provides a ligand contact to anthranilate. Serine 94 contacts Mg(2+). Anthranilate is bound at residue asparagine 113. Arginine 168 is a binding site for anthranilate. Mg(2+)-binding residues include aspartate 227 and glutamate 228.

The protein belongs to the anthranilate phosphoribosyltransferase family. As to quaternary structure, homodimer. Mg(2+) is required as a cofactor.

It carries out the reaction N-(5-phospho-beta-D-ribosyl)anthranilate + diphosphate = 5-phospho-alpha-D-ribose 1-diphosphate + anthranilate. The protein operates within amino-acid biosynthesis; L-tryptophan biosynthesis; L-tryptophan from chorismate: step 2/5. Its function is as follows. Catalyzes the transfer of the phosphoribosyl group of 5-phosphorylribose-1-pyrophosphate (PRPP) to anthranilate to yield N-(5'-phosphoribosyl)-anthranilate (PRA). The chain is Anthranilate phosphoribosyltransferase from Pseudomonas fluorescens (strain Pf0-1).